The sequence spans 441 residues: GTPase Der (441 aa).

EngA-type G domains are found at residues 4-169 and 178-353; these read PVVA…PDSS and PRVA…ENNS. Residues 10-17, 57-61, 120-123, 184-191, 231-235, and 296-299 each bind GTP; these read GRPNVGKS, DTGGI, NKVD, GKPNVGKS, DTAGL, and NKWD. Positions 354–438 constitute a KH-like domain; sequence MRVATGVLNE…ALKFITRERK (85 aa).

It belongs to the TRAFAC class TrmE-Era-EngA-EngB-Septin-like GTPase superfamily. EngA (Der) GTPase family. As to quaternary structure, associates with the 50S ribosomal subunit.

Its function is as follows. GTPase that plays an essential role in the late steps of ribosome biogenesis. This chain is GTPase Der, found in Agathobacter rectalis (strain ATCC 33656 / DSM 3377 / JCM 17463 / KCTC 5835 / VPI 0990) (Eubacterium rectale).